The sequence spans 195 residues: dITP/XTP pyrophosphatase (195 aa).

8-13 (SNNQGK) provides a ligand contact to substrate. Glu39 and Asp68 together coordinate Mg(2+). The Proton acceptor role is filled by Asp68. Residues Ser69, 149–152 (FGYD), Lys172, and 177–178 (HR) each bind substrate.

This sequence belongs to the HAM1 NTPase family. As to quaternary structure, homodimer. The cofactor is Mg(2+).

The enzyme catalyses XTP + H2O = XMP + diphosphate + H(+). The catalysed reaction is dITP + H2O = dIMP + diphosphate + H(+). It carries out the reaction ITP + H2O = IMP + diphosphate + H(+). Its function is as follows. Pyrophosphatase that catalyzes the hydrolysis of nucleoside triphosphates to their monophosphate derivatives, with a high preference for the non-canonical purine nucleotides XTP (xanthosine triphosphate), dITP (deoxyinosine triphosphate) and ITP. Seems to function as a house-cleaning enzyme that removes non-canonical purine nucleotides from the nucleotide pool, thus preventing their incorporation into DNA/RNA and avoiding chromosomal lesions. This chain is dITP/XTP pyrophosphatase, found in Staphylococcus aureus (strain Mu50 / ATCC 700699).